A 950-amino-acid polypeptide reads, in one-letter code: Protocadherin alpha-8 (950 aa).

An N-terminal signal peptide occupies residues 1-29; it reads MVYHWRGDLGSWRLLLLLLLLAAWKVGSG. Cadherin domains are found at residues 30–133, 157–242, 243–350, 351–455, 456–565, and 581–678; these read QLHY…PPVF, ASDA…APNF, EQSE…VPEI, ALTS…APAF, AQPE…APAL, and VPRS…APKA. Residues 30 to 697 are Extracellular-facing; that stretch reads QLHYSVPEEA…GPEAALVDVN (668 aa). Residues Asn-257 and Asn-265 are each glycosylated (N-linked (GlcNAc...) asparagine). Asn-548 carries N-linked (GlcNAc...) asparagine glycosylation. The helical transmembrane segment at 698–718 threads the bilayer; the sequence is VYLIIAICAVSSLLVLTLLLY. The Cytoplasmic portion of the chain corresponds to 719–950; that stretch reads TALRCSALPT…GNSTTDNSDQ (232 aa). PXXP repeat units follow at residues 774–777, 799–802, 832–835, 873–876, and 891–894; these read PCLP, PRQP, PGGP, PGNP, and PGSP. The segment at 774–894 is 5 X 4 AA repeats of P-X-X-P; it reads PCLPPDLGSV…PDKFIIPGSP (121 aa). The tract at residues 831-950 is disordered; that stretch reads GPGGPDQQWP…GNSTTDNSDQ (120 aa). A compositionally biased stretch (basic and acidic residues) spans 909 to 923; the sequence is DKSDFITFGKKEETK.

The protein resides in the cell membrane. Potential calcium-dependent cell-adhesion protein. May be involved in the establishment and maintenance of specific neuronal connections in the brain. The protein is Protocadherin alpha-8 (PCDHA8) of Pan troglodytes (Chimpanzee).